A 226-amino-acid polypeptide reads, in one-letter code: 2-C-methyl-D-erythritol 4-phosphate cytidylyltransferase (226 aa).

Belongs to the IspD/TarI cytidylyltransferase family. IspD subfamily.

It carries out the reaction 2-C-methyl-D-erythritol 4-phosphate + CTP + H(+) = 4-CDP-2-C-methyl-D-erythritol + diphosphate. It participates in isoprenoid biosynthesis; isopentenyl diphosphate biosynthesis via DXP pathway; isopentenyl diphosphate from 1-deoxy-D-xylulose 5-phosphate: step 2/6. In terms of biological role, catalyzes the formation of 4-diphosphocytidyl-2-C-methyl-D-erythritol from CTP and 2-C-methyl-D-erythritol 4-phosphate (MEP). The chain is 2-C-methyl-D-erythritol 4-phosphate cytidylyltransferase from Trichodesmium erythraeum (strain IMS101).